The sequence spans 572 residues: Proline--tRNA ligase (572 aa).

The protein belongs to the class-II aminoacyl-tRNA synthetase family. ProS type 1 subfamily. In terms of assembly, homodimer.

Its subcellular location is the cytoplasm. The enzyme catalyses tRNA(Pro) + L-proline + ATP = L-prolyl-tRNA(Pro) + AMP + diphosphate. Functionally, catalyzes the attachment of proline to tRNA(Pro) in a two-step reaction: proline is first activated by ATP to form Pro-AMP and then transferred to the acceptor end of tRNA(Pro). As ProRS can inadvertently accommodate and process non-cognate amino acids such as alanine and cysteine, to avoid such errors it has two additional distinct editing activities against alanine. One activity is designated as 'pretransfer' editing and involves the tRNA(Pro)-independent hydrolysis of activated Ala-AMP. The other activity is designated 'posttransfer' editing and involves deacylation of mischarged Ala-tRNA(Pro). The misacylated Cys-tRNA(Pro) is not edited by ProRS. In Citrobacter koseri (strain ATCC BAA-895 / CDC 4225-83 / SGSC4696), this protein is Proline--tRNA ligase.